Reading from the N-terminus, the 299-residue chain is F-actin-capping protein subunit alpha-3 (299 aa).

Serine 290 is subject to Phosphoserine.

It belongs to the F-actin-capping protein alpha subunit family. As to quaternary structure, component of the F-actin capping complex, composed of a heterodimer of an alpha and a beta subunit. Component of the WASH complex, composed of F-actin-capping protein subunit alpha (CAPZA1, CAPZA2 or CAPZA3), F-actin-capping protein subunit beta (CAPZB), WASH (WASHC1, WASH2P, WASH3P, WASH4P, WASH5P or WASH6P), WASHC2 (WASHC2A or WASHC2C), WASHC3, WASHC4 and WASHC5. Expressed exclusively in testis and sperm. Highest expression is found in the neck region of ejaculated sperm with lower levels found in the tail and postacrosome region.

It localises to the cytoplasm. Its subcellular location is the cytoskeleton. F-actin-capping proteins bind in a Ca(2+)-independent manner to the fast growing ends of actin filaments (barbed end) thereby blocking the exchange of subunits at these ends. Unlike other capping proteins (such as gelsolin and severin), these proteins do not sever actin filaments. May play a role in the morphogenesis of spermatid. This is F-actin-capping protein subunit alpha-3 (CAPZA3) from Homo sapiens (Human).